Here is a 90-residue protein sequence, read N- to C-terminus: UPF0235 protein CPn_0497/CP_0257/CPj0497/CpB0517 (90 aa).

This sequence belongs to the UPF0235 family.

The protein is UPF0235 protein CPn_0497/CP_0257/CPj0497/CpB0517 of Chlamydia pneumoniae (Chlamydophila pneumoniae).